Here is a 779-residue protein sequence, read N- to C-terminus: Lon protease (779 aa).

Residues 10–203 (LPLLPLRGLL…ILLTILNNER (194 aa)) enclose the Lon N-terminal domain. 355–362 (GPPGVGKT) serves as a coordination point for ATP. Positions 591–772 (KDQVGSVTGL…DEVLRHALTK (182 aa)) constitute a Lon proteolytic domain. Active-site residues include serine 678 and lysine 721.

Belongs to the peptidase S16 family. As to quaternary structure, homohexamer. Organized in a ring with a central cavity.

The protein localises to the cytoplasm. It carries out the reaction Hydrolysis of proteins in presence of ATP.. ATP-dependent serine protease that mediates the selective degradation of mutant and abnormal proteins as well as certain short-lived regulatory proteins. Required for cellular homeostasis and for survival from DNA damage and developmental changes induced by stress. Degrades polypeptides processively to yield small peptide fragments that are 5 to 10 amino acids long. Binds to DNA in a double-stranded, site-specific manner. This chain is Lon protease, found in Brevibacillus choshinensis.